Consider the following 543-residue polypeptide: Chaperonin GroEL 2 (543 aa).

ATP-binding positions include 29 to 32, 86 to 90, Gly413, 478 to 480, and Asp494; these read TLGP, DGTTT, and NAA.

This sequence belongs to the chaperonin (HSP60) family. In terms of assembly, forms a cylinder of 14 subunits composed of two heptameric rings stacked back-to-back. Interacts with the co-chaperonin GroES.

The protein localises to the cytoplasm. It catalyses the reaction ATP + H2O + a folded polypeptide = ADP + phosphate + an unfolded polypeptide.. Functionally, together with its co-chaperonin GroES, plays an essential role in assisting protein folding. The GroEL-GroES system forms a nano-cage that allows encapsulation of the non-native substrate proteins and provides a physical environment optimized to promote and accelerate protein folding. The chain is Chaperonin GroEL 2 from Thermosynechococcus vestitus (strain NIES-2133 / IAM M-273 / BP-1).